Here is a 380-residue protein sequence, read N- to C-terminus: Putative ankyrin repeat protein RF_1306 (380 aa).

9 ANK repeats span residues 48-76 (NKWSDLHIAVGAKELKLVKALCNEKNINA), 80-109 (KCRTPLELAILGNDLETVKFLVQMGGKIAP), 112-143 (YGWSAIHLAIKIDNVEMVEYLYENTEFQKYDK), 170-199 (NNKTPLELAVESKNISSVKALIIKGAKFDI), 203-233 (LGYKIFELAIDSEDMKLIEYLVNHTLVGKNT), 239-268 (LEKVAQIYDKNINLSKLVKVLIKDNAGFDK), 270-299 (LGQKLLQKAIYADDLELVETLYSKGVDAQY), 303-333 (LGRSGLHHAIKANCGEELIQFLIEHTTDINY), and 337-366 (SGLNPLGLAKSNNCTVATKLLLEAGAYESY).

The protein is Putative ankyrin repeat protein RF_1306 of Rickettsia felis (strain ATCC VR-1525 / URRWXCal2) (Rickettsia azadi).